We begin with the raw amino-acid sequence, 299 residues long: Oxygen-dependent coproporphyrinogen-III oxidase (299 aa).

S92 is a binding site for substrate. H96 and H106 together coordinate Mn(2+). H106 (proton donor) is an active-site residue. 108-110 (NVR) contacts substrate. Mn(2+)-binding residues include H145 and H175. The segment at 240 to 275 (YVEFNLVWDRGTLFGLQTGGRTESILMSMPPLVRWE) is important for dimerization. 258–260 (GGR) is a binding site for substrate.

This sequence belongs to the aerobic coproporphyrinogen-III oxidase family. As to quaternary structure, homodimer. Mn(2+) is required as a cofactor.

It is found in the cytoplasm. It catalyses the reaction coproporphyrinogen III + O2 + 2 H(+) = protoporphyrinogen IX + 2 CO2 + 2 H2O. The protein operates within porphyrin-containing compound metabolism; protoporphyrin-IX biosynthesis; protoporphyrinogen-IX from coproporphyrinogen-III (O2 route): step 1/1. Functionally, involved in the heme biosynthesis. Catalyzes the aerobic oxidative decarboxylation of propionate groups of rings A and B of coproporphyrinogen-III to yield the vinyl groups in protoporphyrinogen-IX. This Escherichia coli O17:K52:H18 (strain UMN026 / ExPEC) protein is Oxygen-dependent coproporphyrinogen-III oxidase.